Consider the following 627-residue polypeptide: Protein CER1-like 1 (627 aa).

5 helical membrane-spanning segments follow: residues 19–39, 48–68, 126–146, 186–206, and 328–348; these read FKYL…VTAV, LMIV…ISVS, GAIL…YWFH, LLFA…IVSI, and YLTC…TSAI. Residues 138–272 enclose the Fatty acid hydroxylase domain; sequence VEFLYYWFHR…MPIYDFIYGT (135 aa).

Belongs to the sterol desaturase family. As to expression, expressed in flowers and siliques. Not detected in pollen, pedicels and seeds.

The protein localises to the membrane. This chain is Protein CER1-like 1, found in Arabidopsis thaliana (Mouse-ear cress).